Consider the following 466-residue polypeptide: 3-isopropylmalate dehydratase large subunit (466 aa).

3 residues coordinate [4Fe-4S] cluster: Cys-347, Cys-407, and Cys-410.

This sequence belongs to the aconitase/IPM isomerase family. LeuC type 1 subfamily. Heterodimer of LeuC and LeuD. The cofactor is [4Fe-4S] cluster.

The enzyme catalyses (2R,3S)-3-isopropylmalate = (2S)-2-isopropylmalate. It functions in the pathway amino-acid biosynthesis; L-leucine biosynthesis; L-leucine from 3-methyl-2-oxobutanoate: step 2/4. In terms of biological role, catalyzes the isomerization between 2-isopropylmalate and 3-isopropylmalate, via the formation of 2-isopropylmaleate. The polypeptide is 3-isopropylmalate dehydratase large subunit (Shewanella loihica (strain ATCC BAA-1088 / PV-4)).